The primary structure comprises 198 residues: Probable GTP-binding protein EngB (198 aa).

One can recognise an EngB-type G domain in the interval 22–195; the sequence is NIPEVALAGR…LEVIGRWVGL (174 aa). GTP is bound by residues 30–37, 57–61, 75–78, 142–145, and 174–176; these read GRSNVGKS, GRTRL, DLPG, TKAD, and FSA. Serine 37 and threonine 59 together coordinate Mg(2+).

Belongs to the TRAFAC class TrmE-Era-EngA-EngB-Septin-like GTPase superfamily. EngB GTPase family. Mg(2+) is required as a cofactor.

Necessary for normal cell division and for the maintenance of normal septation. The protein is Probable GTP-binding protein EngB of Pelotomaculum thermopropionicum (strain DSM 13744 / JCM 10971 / SI).